The primary structure comprises 121 residues: Large ribosomal subunit protein bL19 (121 aa).

The protein belongs to the bacterial ribosomal protein bL19 family.

Its function is as follows. This protein is located at the 30S-50S ribosomal subunit interface and may play a role in the structure and function of the aminoacyl-tRNA binding site. In Mesomycoplasma hyopneumoniae (strain 7448) (Mycoplasma hyopneumoniae), this protein is Large ribosomal subunit protein bL19.